A 273-amino-acid polypeptide reads, in one-letter code: Undecaprenyl-diphosphatase (273 aa).

8 helical membrane passes run 3–23 (IIEL…EFAP), 48–68 (GANT…VVVF), 89–109 (LTLM…VLFE), 116–136 (LFST…MIAA), 151–171 (ITYK…WPGF), 192–212 (ADFT…ISLL), 225–245 (FFVV…RFFL), and 253–273 (LVPF…VYFA).

Belongs to the UppP family.

It is found in the cell membrane. It catalyses the reaction di-trans,octa-cis-undecaprenyl diphosphate + H2O = di-trans,octa-cis-undecaprenyl phosphate + phosphate + H(+). Functionally, catalyzes the dephosphorylation of undecaprenyl diphosphate (UPP). Confers resistance to bacitracin. The sequence is that of Undecaprenyl-diphosphatase from Anoxybacillus flavithermus (strain DSM 21510 / WK1).